Consider the following 680-residue polypeptide: Transketolase 1 (680 aa).

Residue His30 participates in substrate binding. Residues His69 and 116–118 (GPL) contribute to the thiamine diphosphate site. Asp157 serves as a coordination point for Mg(2+). Gly158 and Asn187 together coordinate thiamine diphosphate. The Mg(2+) site is built by Asn187 and Ile189. His263 is a binding site for substrate. Thiamine diphosphate is bound at residue His263. Residues Ser286 and Ser335 each carry the phosphoserine modification. Substrate-binding residues include Arg359 and Ser386. A Phosphoserine modification is found at Ser402. 2 residues coordinate thiamine diphosphate: Glu418 and Phe445. Catalysis depends on Glu418, which acts as the Proton donor. Residues His469 and Asp477 each contribute to the substrate site. Ser492 carries the phosphoserine modification. Arg528 is a binding site for substrate. A Glycyl lysine isopeptide (Lys-Gly) (interchain with G-Cter in ubiquitin) cross-link involves residue Lys647.

The protein belongs to the transketolase family. As to quaternary structure, homodimer. It depends on Mg(2+) as a cofactor. The cofactor is Ca(2+). Mn(2+) is required as a cofactor. Co(2+) serves as cofactor. Requires thiamine diphosphate as cofactor.

It carries out the reaction D-sedoheptulose 7-phosphate + D-glyceraldehyde 3-phosphate = aldehydo-D-ribose 5-phosphate + D-xylulose 5-phosphate. In terms of biological role, catalyzes the transfer of a two-carbon ketol group from a ketose donor to an aldose acceptor, via a covalent intermediate with the cofactor thiamine pyrophosphate. This Saccharomyces cerevisiae (strain ATCC 204508 / S288c) (Baker's yeast) protein is Transketolase 1 (TKL1).